The primary structure comprises 359 residues: Fructose-bisphosphate aldolase class 2 (359 aa).

A D-glyceraldehyde 3-phosphate-binding site is contributed by Ser62. The active-site Proton donor is Asp110. Zn(2+)-binding residues include His111, Asp145, Glu175, and His227. Gly228 serves as a coordination point for dihydroxyacetone phosphate. Residue His265 coordinates Zn(2+). Dihydroxyacetone phosphate is bound by residues 266–268 and 287–290; these read GGS and NIDT.

It belongs to the class II fructose-bisphosphate aldolase family. Zn(2+) serves as cofactor.

The enzyme catalyses beta-D-fructose 1,6-bisphosphate = D-glyceraldehyde 3-phosphate + dihydroxyacetone phosphate. Its pathway is carbohydrate degradation; glycolysis; D-glyceraldehyde 3-phosphate and glycerone phosphate from D-glucose: step 4/4. Functionally, catalyzes the aldol condensation of dihydroxyacetone phosphate (DHAP or glycerone-phosphate) with glyceraldehyde 3-phosphate (G3P) to form fructose 1,6-bisphosphate (FBP) in gluconeogenesis and the reverse reaction in glycolysis. The protein is Fructose-bisphosphate aldolase class 2 (fbaA) of Buchnera aphidicola subsp. Baizongia pistaciae (strain Bp).